A 655-amino-acid polypeptide reads, in one-letter code: Macrolide export ATP-binding/permease protein MacB (655 aa).

One can recognise an ABC transporter domain in the interval 6–244 (IVLRGLRREY…VAAPTAAAAQ (239 aa)). 42-49 (GASGSGKS) is an ATP binding site. 4 helical membrane-spanning segments follow: residues 279 to 299 (FLTM…VAVG), 528 to 548 (LTLM…IGVM), 579 to 599 (FLIE…AVAY), and 618 to 638 (AGSI…FGYL).

It belongs to the ABC transporter superfamily. Macrolide exporter (TC 3.A.1.122) family. Homodimer.

The protein localises to the cell inner membrane. Non-canonical ABC transporter that contains transmembrane domains (TMD), which form a pore in the inner membrane, and an ATP-binding domain (NBD), which is responsible for energy generation. Confers resistance against macrolides. In Rhodopseudomonas palustris (strain BisB18), this protein is Macrolide export ATP-binding/permease protein MacB.